The following is a 358-amino-acid chain: Putative hydrogenase expression/formation protein MJ0993 (358 aa).

The Fe cation site is built by cysteine 33, cysteine 61, and cysteine 64.

This sequence belongs to the HypD family.

The chain is Putative hydrogenase expression/formation protein MJ0993 from Methanocaldococcus jannaschii (strain ATCC 43067 / DSM 2661 / JAL-1 / JCM 10045 / NBRC 100440) (Methanococcus jannaschii).